Here is a 581-residue protein sequence, read N- to C-terminus: Protein phosphatase 2C 70 (581 aa).

Residues 1–7 (MAMIGMN) lie on the Extracellular side of the membrane. Residues 8 to 28 (IIGLFMVLMLLLISLIILFAC) form a helical membrane-spanning segment. At 29–581 (KPWRYFSRFR…IIYLDFDTSL (553 aa)) the chain is on the cytoplasmic side. In terms of domain architecture, FHA spans 208-259 (VKLGRVSPSDLALKDSEVSGKHAQITWNSTKFKWELVDMGSLNGTLVNSHSI). Residues 304-577 (KIGVASDPMA…DNTSIIYLDF (274 aa)) enclose the PPM-type phosphatase domain. Residues D346, G347, D521, and D568 each contribute to the Mn(2+) site.

As to quaternary structure, association of RLK5 with kapp domain is dependent on phosphorylation of RLK5 and can be abolished by dephosphorylation. Interacts with SERK1 and CDC48A. Component of the SERK1 signaling complex, composed of KAPP, CDC48A, GRF6 or GRF7, SERK1, SERK2, SERK3/BAK1 and BRI1. Interacts with CLV1. The cofactor is Mg(2+). Requires Mn(2+) as cofactor. In terms of tissue distribution, expressed in all tissues examined.

It localises to the cell membrane. The catalysed reaction is O-phospho-L-seryl-[protein] + H2O = L-seryl-[protein] + phosphate. It catalyses the reaction O-phospho-L-threonyl-[protein] + H2O = L-threonyl-[protein] + phosphate. Dephosphorylates the Ser/Thr receptor-like kinase RLK5. May function as a signaling component in a pathway involving RLK5. Binds and dephosphorylates CLAVATA1 (CLV1). Functions as a negative regulator of the CLV1 signaling in plant development. Dephosphorylates SERK1 receptor kinase on threonine residues in the A-loop. Dephosphorylation of SERK1 controls SERK1 internalization. Component of a signaling pathway which mediates adaptation to NaCl stress. Is not a component of the SALT OVERLY SENSITIVE (SOS) pathway. This Arabidopsis thaliana (Mouse-ear cress) protein is Protein phosphatase 2C 70.